Reading from the N-terminus, the 33-residue chain is Cytochrome b6-f complex subunit 8 (33 aa).

A helical transmembrane segment spans residues 2 to 22 (LISLGWAALAATFTFSIAMVV).

This sequence belongs to the PetN family. The 4 large subunits of the cytochrome b6-f complex are cytochrome b6, subunit IV (17 kDa polypeptide, PetD), cytochrome f and the Rieske protein, while the 4 small subunits are PetG, PetL, PetM and PetN. The complex functions as a dimer.

The protein resides in the cellular thylakoid membrane. Functionally, component of the cytochrome b6-f complex, which mediates electron transfer between photosystem II (PSII) and photosystem I (PSI), cyclic electron flow around PSI, and state transitions. The chain is Cytochrome b6-f complex subunit 8 from Synechococcus sp. (strain RCC307).